The chain runs to 307 residues: MSERVKVAILGSGNIGTDLMYKLLKNPGHMELVAVVGIDPKSEGLARARALGLEASHEGIAYILERPEIKIVFDATSAKAHVRHAKLLREAGKIAIDLTPAARGPYVVPPVNLKEHLDKDNVNLITCGGQATIPLVYAVHRVAPVLYAEMVSTVASRSAGPGTRQNIDEFTFTTARGLEAIGGAKKGKAIIILNPAEPPILMTNTVRCIPEDEGFDREAVVASVRAMEREVQAYVPGYRLKADPVFERLPTPWGERTVVSMLLEVEGAGDYLPKYAGNLDIMTASARRVGEVFAQHLLGKPVEEVVA.

Residue 12 to 15 (SGNI) coordinates NAD(+). The active-site Acyl-thioester intermediate is the Cys127. Residues 158-166 (SAGPGTRQN) and Asn278 each bind NAD(+).

This sequence belongs to the acetaldehyde dehydrogenase family. As to quaternary structure, monomer. Can also form a heterotetramer composed of two aldolase (TTHB246) and two dehydrogenase (TTHB247) subunits. Upon complex formation, the aldolase shows a 5-fold increase in substrate affinity, while the dehydrogenase shows a 3-fold decrease; the kcat values of each enzyme are reduced by 2-fold when they are in a complex.

The catalysed reaction is acetaldehyde + NAD(+) + CoA = acetyl-CoA + NADH + H(+). It catalyses the reaction propanal + NAD(+) + CoA = propanoyl-CoA + NADH + H(+). Functionally, catalyzes the conversion of acetaldehyde or propanal to acetyl-CoA or propanoyl-CoA, respectively, using NAD(+) and coenzyme A. The aldehyde substrates can be directly channeled from the aldolase TTHB246 to the dehydrogenase TTHB247. Is the final enzyme in the meta-cleavage pathway for the degradation of aromatic compounds. The chain is Acetaldehyde dehydrogenase from Thermus thermophilus (strain ATCC 27634 / DSM 579 / HB8).